Consider the following 213-residue polypeptide: Putative manganese efflux pump MntP (213 aa).

6 helical membrane-spanning segments follow: residues 3-23 (ILSI…VSVA), 36-56 (ALKV…IGWG), 67-87 (AFDH…MIFE), 130-150 (LAIA…FLGI), 152-172 (IVQT…LGVI), and 187-207 (IVGG…HTGI).

This sequence belongs to the MntP (TC 9.B.29) family.

It localises to the cell membrane. Functionally, probably functions as a manganese efflux pump. This Clostridium perfringens (strain 13 / Type A) protein is Putative manganese efflux pump MntP.